A 186-amino-acid chain; its full sequence is Translation initiation factor IF-3 (186 aa).

This sequence belongs to the IF-3 family. As to quaternary structure, monomer.

The protein resides in the cytoplasm. IF-3 binds to the 30S ribosomal subunit and shifts the equilibrium between 70S ribosomes and their 50S and 30S subunits in favor of the free subunits, thus enhancing the availability of 30S subunits on which protein synthesis initiation begins. The chain is Translation initiation factor IF-3 from Borrelia garinii subsp. bavariensis (strain ATCC BAA-2496 / DSM 23469 / PBi) (Borreliella bavariensis).